A 348-amino-acid polypeptide reads, in one-letter code: Rhodopsin (348 aa).

The residue at position 1 (methionine 1) is an N-acetylmethionine. The Extracellular portion of the chain corresponds to 1-36; the sequence is MNGTEGPNFYVPFSNKTGVVRSPFEEPQYYLAEPWQ. N-linked (GlcNAc...) asparagine glycosylation is found at asparagine 2 and asparagine 15. A helical membrane pass occupies residues 37–61; it reads FSCLAAYMFMLIVLGFPINFLTLYV. The Cytoplasmic portion of the chain corresponds to 62–73; that stretch reads TIQHKKLRTPLN. A helical membrane pass occupies residues 74–96; that stretch reads YILLNLAIADLFMVFGGFTTTLY. At 97–110 the chain is on the extracellular side; that stretch reads TSLHGYFVFGPTGC. Cysteine 110 and cysteine 187 are oxidised to a cystine. Residues 111–133 traverse the membrane as a helical segment; sequence DLEGFFATLGGEIALWSLVVLAI. The 'Ionic lock' involved in activated form stabilization motif lies at 134–136; sequence ERY. Over 134–152 the chain is Cytoplasmic; it reads ERYIVVCKPMSNFRFGENH. The chain crosses the membrane as a helical span at residues 153 to 173; that stretch reads AIMGVAFTWVMALACAAPPLV. Topologically, residues 174 to 202 are extracellular; the sequence is GWSRYIPEGMQCSCGIDYYTLKPEVNNES. A Zn(2+)-binding site is contributed by glutamate 201. A helical membrane pass occupies residues 203 to 224; that stretch reads FVIYMFVVHFTIPMVVIFFCYG. Residues 225–252 are Cytoplasmic-facing; that stretch reads QLVFTVKEAAAQQQESATTQKAEKEVTR. The helical transmembrane segment at 253-274 threads the bilayer; sequence MVIIMVIAFLICWLPYAGVAFY. Residues 275-286 lie on the Extracellular side of the membrane; that stretch reads IFTHQGSNFGPI. Glutamine 279 is a Zn(2+) binding site. A helical transmembrane segment spans residues 287-308; it reads LMTLPAFFAKTSAVYNPVIYIM. Lysine 296 is subject to N6-(retinylidene)lysine. The Cytoplasmic segment spans residues 309–348; sequence LNKQFRTCMLTTLCCGKIPLGDDEASATASKTETSQVAPA. 2 S-palmitoyl cysteine lipidation sites follow: cysteine 322 and cysteine 323. The interval 330 to 348 is interaction with SAG; the sequence is DDEASATASKTETSQVAPA. Serine 334 carries the post-translational modification Phosphoserine. Threonine 336 is subject to Phosphothreonine. Phosphoserine is present on serine 338. Phosphothreonine occurs at positions 340 and 342. At serine 343 the chain carries Phosphoserine.

This sequence belongs to the G-protein coupled receptor 1 family. Opsin subfamily. As to quaternary structure, homodimer. May form a complex composed of RHO, GRK1 and RCVRN in a Ca(2+)-dependent manner; RCVRN prevents the interaction between GRK1 and RHO. Interacts with GRK1. Interacts (phosphorylated form) with SAG. Interacts with GNAT1. Interacts with GNAT3. SAG and G-proteins compete for a common binding site. Interacts with PRCD; the interaction promotes PRCD stability. Forms a complex with ASAP1 and ARF4. Forms a complex with ASAP1, RAB11A, Rabin8/RAB3IP, ARF4 and RAB11FIP3; the complex regulates Golgi-to-cilia rhodopsin/RHO transport in photoreceptors. Phosphorylated on some or all of the serine and threonine residues present in the C-terminal region. Post-translationally, contains one covalently linked retinal chromophore. Upon light absorption, the covalently bound 11-cis-retinal is converted to all-trans-retinal. After hydrolysis of the Schiff base and release of the covalently bound all-trans-retinal, active rhodopsin is regenerated by binding of a fresh molecule of 11-cis-retinal.

The protein resides in the membrane. The protein localises to the cell projection. It is found in the cilium. Its subcellular location is the photoreceptor outer segment. In terms of biological role, photoreceptor required for image-forming vision at low light intensity. Required for photoreceptor cell viability after birth. Light-induced isomerization of 11-cis to all-trans retinal triggers a conformational change that activates signaling via G-proteins. Subsequent receptor phosphorylation mediates displacement of the bound G-protein alpha subunit by the arrestin SAG and terminates signaling. The polypeptide is Rhodopsin (RHO) (Caluromys philander (Bare-tailed woolly opossum)).